We begin with the raw amino-acid sequence, 77 residues long: Acyl carrier protein (77 aa).

The Carrier domain occupies 1 to 76; it reads MADFEKVKSI…DVTKFIDNLK (76 aa). The residue at position 36 (Ser-36) is an O-(pantetheine 4'-phosphoryl)serine.

The protein belongs to the acyl carrier protein (ACP) family. In terms of processing, 4'-phosphopantetheine is transferred from CoA to a specific serine of apo-ACP by AcpS. This modification is essential for activity because fatty acids are bound in thioester linkage to the sulfhydryl of the prosthetic group.

The protein resides in the cytoplasm. Its pathway is lipid metabolism; fatty acid biosynthesis. In terms of biological role, carrier of the growing fatty acid chain in fatty acid biosynthesis. The sequence is that of Acyl carrier protein from Leptospira borgpetersenii serovar Hardjo-bovis (strain JB197).